The primary structure comprises 151 residues: Arginine repressor (151 aa).

The protein belongs to the ArgR family.

The protein resides in the cytoplasm. Its pathway is amino-acid biosynthesis; L-arginine biosynthesis [regulation]. In terms of biological role, regulates arginine biosynthesis genes. The sequence is that of Arginine repressor from Moorella thermoacetica (strain ATCC 39073 / JCM 9320).